Here is a 236-residue protein sequence, read N- to C-terminus: tRNA (guanine-N(1)-)-methyltransferase (236 aa).

Residues G110 and 129–134 (LGDFVL) contribute to the S-adenosyl-L-methionine site.

This sequence belongs to the RNA methyltransferase TrmD family. As to quaternary structure, homodimer.

The protein localises to the cytoplasm. It catalyses the reaction guanosine(37) in tRNA + S-adenosyl-L-methionine = N(1)-methylguanosine(37) in tRNA + S-adenosyl-L-homocysteine + H(+). In terms of biological role, specifically methylates guanosine-37 in various tRNAs. This is tRNA (guanine-N(1)-)-methyltransferase from Clostridium perfringens (strain ATCC 13124 / DSM 756 / JCM 1290 / NCIMB 6125 / NCTC 8237 / Type A).